An 874-amino-acid polypeptide reads, in one-letter code: Alanine--tRNA ligase (874 aa).

Positions 564, 568, 665, and 669 each coordinate Zn(2+).

It belongs to the class-II aminoacyl-tRNA synthetase family. The cofactor is Zn(2+).

Its subcellular location is the cytoplasm. It catalyses the reaction tRNA(Ala) + L-alanine + ATP = L-alanyl-tRNA(Ala) + AMP + diphosphate. Its function is as follows. Catalyzes the attachment of alanine to tRNA(Ala) in a two-step reaction: alanine is first activated by ATP to form Ala-AMP and then transferred to the acceptor end of tRNA(Ala). Also edits incorrectly charged Ser-tRNA(Ala) and Gly-tRNA(Ala) via its editing domain. The chain is Alanine--tRNA ligase from Burkholderia cenocepacia (strain HI2424).